Here is a 466-residue protein sequence, read N- to C-terminus: MSYASVVDVLTGKVAVDETVTVRGWVRTRRDSKAGISFINLHDGSCFDAIQAVVPAELPNYSNEVQKLTTGCSVAITGVVVPSQGKGQSFELQATKVHVYGWVEDPDTYPMAPKRHSMEYLREYAHLRPRTNITGAVMRVRNALSQAIHRFFHEEGYLWVSTPIITTSDCEGAGEMFRVSTLDMLNIPKTDKGEVDYSEDFFGKEAFLTVSGQLNVESYACSLSKVYTFGPTFRAENSNTSRHLSEFWMVEPELAFATLDDVAGLAEAMLKYVFKAVLEERPDDMAFFAERINSDAISRLEAIVNNDFVHMDYTDAIEILKNCDRKFEYAVEWGVDLQSEHERYLAEEHVGAPIILKNYPRDIKAFYMRQNEDGKTVAAMDVLAPGIGEIIGGSAREERLDILDQRIDEMNLPKEEYGFYRDLRRYGTVPHAGFGLGFERLVAYVTGVQNIRDVIPFPRAPKSAEF.

Belongs to the class-II aminoacyl-tRNA synthetase family. In terms of assembly, homodimer.

It localises to the cytoplasm. It catalyses the reaction tRNA(Asn) + L-asparagine + ATP = L-asparaginyl-tRNA(Asn) + AMP + diphosphate + H(+). The polypeptide is Asparagine--tRNA ligase (Idiomarina loihiensis (strain ATCC BAA-735 / DSM 15497 / L2-TR)).